The sequence spans 238 residues: Protein shisa-3 homolog (238 aa).

The first 21 residues, 1–21 (MRALLALCLLLGWLRWGPAGA), serve as a signal peptide directing secretion. Topologically, residues 22 to 98 (QQSGEYCHGW…GITAQPVYVP (77 aa)) are lumenal. A helical transmembrane segment spans residues 99–119 (FLIVGSIFIAFIILGSVVAIY). Over 120-238 (CCTCLRPKEP…GKSCPDFSSS (119 aa)) the chain is Cytoplasmic. The segment at 151–173 (TSTSPRAPSRQSSTATSSSSTGG) is disordered. Over residues 159 to 173 (SRQSSTATSSSSTGG) the composition is skewed to low complexity.

The protein belongs to the shisa family.

It localises to the endoplasmic reticulum membrane. Its function is as follows. Plays an essential role in the maturation of presomitic mesoderm cells by individual attenuation of both FGF and WNT signaling. This is Protein shisa-3 homolog (SHISA3) from Homo sapiens (Human).